Reading from the N-terminus, the 178-residue chain is MRTFNIATEKSHRINREITAPEIRLTGVEGEQLGIVKLFDALRLAEEKDVDLVEIAPTAQPPVCRLMDYGKFKYQEQKKAHEAKLKQKVIQVKEVKFRPGTDDGDYEVKLRNLKRFLDEGDRTKITLRFRGREMAHQEIGARMLDRLKTDLEEFGQVEQMPKMEGRQMVMMLAPKKRK.

This sequence belongs to the IF-3 family. In terms of assembly, monomer.

Its subcellular location is the cytoplasm. In terms of biological role, IF-3 binds to the 30S ribosomal subunit and shifts the equilibrium between 70S ribosomes and their 50S and 30S subunits in favor of the free subunits, thus enhancing the availability of 30S subunits on which protein synthesis initiation begins. The protein is Translation initiation factor IF-3 of Ralstonia nicotianae (strain ATCC BAA-1114 / GMI1000) (Ralstonia solanacearum).